The following is a 371-amino-acid chain: 4-hydroxy-3-methylbut-2-en-1-yl diphosphate synthase (flavodoxin) (371 aa).

The [4Fe-4S] cluster site is built by C270, C273, C305, and E312.

It belongs to the IspG family. [4Fe-4S] cluster serves as cofactor.

It catalyses the reaction (2E)-4-hydroxy-3-methylbut-2-enyl diphosphate + oxidized [flavodoxin] + H2O + 2 H(+) = 2-C-methyl-D-erythritol 2,4-cyclic diphosphate + reduced [flavodoxin]. It participates in isoprenoid biosynthesis; isopentenyl diphosphate biosynthesis via DXP pathway; isopentenyl diphosphate from 1-deoxy-D-xylulose 5-phosphate: step 5/6. Its function is as follows. Converts 2C-methyl-D-erythritol 2,4-cyclodiphosphate (ME-2,4cPP) into 1-hydroxy-2-methyl-2-(E)-butenyl 4-diphosphate. This Shewanella sp. (strain W3-18-1) protein is 4-hydroxy-3-methylbut-2-en-1-yl diphosphate synthase (flavodoxin).